Reading from the N-terminus, the 241-residue chain is MATVSMRDMLQAGVHFGHQTRYWNPKMKPFIFGARNKVHIINLEKTVPMFNDALAELNKIASRKGKILFVGTKRAASEAVKEAAQNCDQFFVNHRWLGGMLTNWKTVRQSIKRLKDLEAQSQDGTFDKLTKKEALIRSRELGKLENSLGGIKDMGGLPDALFVIDAEHEHIAIKEANNLGIPVFAVVDTNSDPDGVDFIIPGNDDAIRAVKLYLGAVATAVREGRSQDLAVQAEESFVEAE.

This sequence belongs to the universal ribosomal protein uS2 family.

This Photorhabdus laumondii subsp. laumondii (strain DSM 15139 / CIP 105565 / TT01) (Photorhabdus luminescens subsp. laumondii) protein is Small ribosomal subunit protein uS2.